Here is a 343-residue protein sequence, read N- to C-terminus: Major outer membrane protein (343 aa).

The signal sequence occupies residues 1–20 (MKKTIVALAVAAVAATSANA).

As to quaternary structure, disulfide bond interactions within and between MOMP molecules and other components form high molecular-weight oligomers.

The protein resides in the cell outer membrane. Structural rigidity of the outer membrane of elementary bodies and porin forming, permitting diffusion of solutes through the intracellular reticulate body membrane. In Pasteurella multocida, this protein is Major outer membrane protein (ompH).